The primary structure comprises 488 residues: L-arabinose isomerase 1 (488 aa).

E306, E331, H348, and H447 together coordinate Mn(2+).

This sequence belongs to the arabinose isomerase family. Requires Mn(2+) as cofactor.

The enzyme catalyses beta-L-arabinopyranose = L-ribulose. It functions in the pathway carbohydrate degradation; L-arabinose degradation via L-ribulose; D-xylulose 5-phosphate from L-arabinose (bacterial route): step 1/3. In terms of biological role, catalyzes the conversion of L-arabinose to L-ribulose. This Clostridium acetobutylicum (strain ATCC 824 / DSM 792 / JCM 1419 / IAM 19013 / LMG 5710 / NBRC 13948 / NRRL B-527 / VKM B-1787 / 2291 / W) protein is L-arabinose isomerase 1.